A 366-amino-acid polypeptide reads, in one-letter code: DNA integrity scanning protein DisA (366 aa).

The 139-residue stretch at 21–159 (VHTLKGTLQR…EGKAHMLEQP (139 aa)) folds into the DAC domain. ATP contacts are provided by residues Gly-88, Leu-106, and 119–123 (TRHRS).

Belongs to the DisA family. As to quaternary structure, homooctamer. The cofactor is Mg(2+).

The catalysed reaction is 2 ATP = 3',3'-c-di-AMP + 2 diphosphate. Participates in a DNA-damage check-point. DisA forms globular foci that rapidly scan along the chromosomes searching for lesions. Its function is as follows. Also has diadenylate cyclase activity, catalyzing the condensation of 2 ATP molecules into cyclic di-AMP (c-di-AMP). c-di-AMP likely acts as a signaling molecule that may couple DNA integrity with a cellular process. In Corynebacterium glutamicum (strain R), this protein is DNA integrity scanning protein DisA.